A 671-amino-acid polypeptide reads, in one-letter code: Fusexin 1 (671 aa).

At 1–12 the chain is on the cytoplasmic side; that stretch reads MRAVSDFLKNKW. The chain crosses the membrane as a helical span at residues 13–33; it reads VAVPAVALLILSLGFLAQNYI. Over 34-574 the chain is Extracellular; sequence TGSFVSGDQI…DPFCADGPLE (541 aa). Intrachain disulfides connect C145-C180, C409-C452, C480-C500, and C513-C528. A fusion loop region spans residues 168–173; sequence GAIADY. Residues 575–595 traverse the membrane as a helical segment; sequence MLSKMFHLVAGTAVAFFTGSL. Over 596 to 628 the chain is Cytoplasmic; it reads GYRAGRWVDGEYQIKGGFDPLKSRSVSRAKRGR. The helical transmembrane segment at 629–649 threads the bilayer; sequence FLIGLIAELVSFLLGFYVILL. Position 650 (V650) is a topological domain, extracellular. A helical transmembrane segment spans residues 651 to 671; the sequence is PIWAQLMVILGYVLFKYYTPF.

This sequence belongs to the HAP2/GCS1 family. Fusexin 1 subfamily. As to quaternary structure, homotrimer stabilized by interdomain contacts and numerous Ca(2+) and Na(+) ions.

It is found in the cell surface. It localises to the cell membrane. Its function is as follows. Exhibits fusogenic activity. Mediates cell-cell fusion in mammalian cells (bilateral fusion). The polypeptide is Fusexin 1 (Natrinema altunense (strain JCM 12890 / CGMCC 1.3731 / AJ2)).